The following is an 822-amino-acid chain: ATP-dependent zinc metalloprotease FtsH (822 aa).

At 1–76 (MEFNKLELLI…NQKEPGKARK (76 aa)) the chain is on the cytoplasmic side. Over residues 44 to 54 (SLDQPSDAPSN) the composition is skewed to polar residues. The disordered stretch occupies residues 44-71 (SLDQPSDAPSNNKKRNLDQPDNPNQKEP). The helical transmembrane segment at 77–97 (IIWSFIIIILVLGVLALIILS) threads the bilayer. Topologically, residues 98 to 251 (GFSFSATSLN…QSMSLPTSYS (154 aa)) are extracellular. The helical transmembrane segment at 252–272 (FYTAASLVLSILPFILLIGII) threads the bilayer. Residues 273 to 822 (YYSMRKMGQA…SKESSSDKKK (550 aa)) are Cytoplasmic-facing. 347-354 (GPPGTGKT) is an ATP binding site. H569 provides a ligand contact to Zn(2+). E570 is an active-site residue. H573 and D648 together coordinate Zn(2+). Over residues 758-794 (KKELEEKKKAEDLIRKAKKESEASSKEEKEMDVEKKV) the composition is skewed to basic and acidic residues. Positions 758–822 (KKELEEKKKA…SKESSSDKKK (65 aa)) are disordered. Over residues 796-805 (KPSASSTEPT) the composition is skewed to low complexity. A compositionally biased stretch (basic and acidic residues) spans 812-822 (PSKESSSDKKK).

This sequence in the central section; belongs to the AAA ATPase family. In the C-terminal section; belongs to the peptidase M41 family. In terms of assembly, homohexamer. Zn(2+) serves as cofactor.

The protein localises to the cell membrane. In terms of biological role, acts as a processive, ATP-dependent zinc metallopeptidase for both cytoplasmic and membrane proteins. Plays a role in the quality control of integral membrane proteins. In Malacoplasma penetrans (strain HF-2) (Mycoplasma penetrans), this protein is ATP-dependent zinc metalloprotease FtsH.